A 193-amino-acid chain; its full sequence is Selenoprotein S A (193 aa).

Residues 29–49 (WALASYGWYILFGCIILYFLI) form a helical membrane-spanning segment. Residues 114-125 (IETWDRMQEGKS) show a composition bias toward basic and acidic residues. Positions 114-193 (IETWDRMQEG…RRGPSSGGUG (80 aa)) are disordered. Low complexity predominate over residues 137–153 (SPSTSASSSPSTSSSAP). Position 192 (Sec-192) is a non-standard amino acid, selenocysteine.

Belongs to the selenoprotein S family.

The protein resides in the endoplasmic reticulum membrane. It is found in the cytoplasm. Its function is as follows. Involved in the degradation process of misfolded endoplasmic reticulum (ER) luminal proteins. Participates in the transfer of misfolded proteins from the ER to the cytosol, where they are destroyed by the proteasome in a ubiquitin-dependent manner. This chain is Selenoprotein S A (vimp-a), found in Xenopus laevis (African clawed frog).